The following is a 113-amino-acid chain: Propane 2-monooxygenase, effector component (113 aa).

It belongs to the TmoD/XamoD family. The propane 2-monooxygenase multicomponent enzyme system is composed of an electron transfer component and a monooxygenase component interacting with the effector protein PrmD. The electron transfer component is composed of a reductase (PrmB), and the monooxygenase component is formed by a large subunit (PrmA) and a small subunit (PrmC).

Effector component of the propane 2-monooxygenase multicomponent enzyme system which is involved in the degradation of propane via the O2-dependent hydroxylation of propane. In Rhodococcus jostii (strain RHA1), this protein is Propane 2-monooxygenase, effector component.